Here is a 470-residue protein sequence, read N- to C-terminus: FAD-dependent monooxygenase SAT7 (470 aa).

A helical transmembrane segment spans residues 28-48 (GLSVAIVGGGIVGIALALGLV). FAD contacts are provided by E58, A71, and R143. Active-site residues include R227 and Y260. The FAD site is built by D351 and A364.

This sequence belongs to the paxM FAD-dependent monooxygenase family. FAD serves as cofactor.

The protein localises to the membrane. Its pathway is mycotoxin biosynthesis. Functionally, FAD-dependent monooxygenase; part of the satratoxin SC1 cluster involved in the biosynthesis of satratoxins, trichothecene mycotoxins that are associated with human food poisonings. Satratoxins are suggested to be made by products of multiple gene clusters (SC1, SC2 and SC3) that encode 21 proteins in all, including polyketide synthases, acetyltransferases, and other enzymes expected to modify the trichothecene skeleton. SC1 encodes 10 proteins, SAT1 to SAT10. The largest are SAT8, which encodes a putative polyketide synthase (PKS) with a conventional non-reducing architecture, and SAT10, a putative protein containing four ankyrin repeats and thus may be involved in protein scaffolding. The putative short-chain reductase SAT3 may assist the PKS in some capacity. SAT6 contains a secretory lipase domain and acts probably as a trichothecene esterase. SAT5 encodes a putative acetyltransferase, and so, with SAT6, may affect endogenous protection from toxicity. The probable transcription factor SAT9 may regulate the expression of the SC1 cluster. SC2 encodes proteins SAT11 to SAT16, the largest of which encodes the putative reducing PKS SAT13. SAT11 is a cytochrome P450 monooxygenase, while SAT14 and SAT16 are probable acetyltransferases. The SC2 cluster may be regulated by the transcription factor SAT15. SC3 is a small cluster that encodes 5 proteins, SAT17 to SAT21. SAT21 is a putative MFS-type transporter which may have a role in exporting secondary metabolites. The four other proteins putatively encoded in SC3 include the taurine hydroxylase-like protein SAT17, the O-methyltransferase SAT18, the acetyltransferase SAT19, and the Cys6-type zinc finger SAT20, the latter being probably involved in regulation of SC3 expression. This is FAD-dependent monooxygenase SAT7 from Stachybotrys chartarum (strain CBS 109288 / IBT 7711) (Toxic black mold).